The primary structure comprises 245 residues: Type II restriction enzyme EcoRV (245 aa).

Mg(2+)-binding residues include E45, D74, and D90. Active-site residues include D74, D90, and K92.

Homodimer. It depends on Mg(2+) as a cofactor.

It catalyses the reaction Endonucleolytic cleavage of DNA to give specific double-stranded fragments with terminal 5'-phosphates.. A P subtype restriction enzyme that recognizes the double-stranded sequence 5'-GATATC-3' and cleaves after T-3. The polypeptide is Type II restriction enzyme EcoRV (ecoRVR) (Escherichia coli).